The chain runs to 367 residues: Undecaprenyl-phosphate alpha-N-acetylglucosaminyl 1-phosphate transferase (367 aa).

The next 9 membrane-spanning stretches (helical) occupy residues Leu-3–Leu-23, Gly-45–Leu-65, Tyr-69–Met-89, Trp-129–Ile-149, Ile-158–Trp-178, Met-187–Leu-207, Val-213–Glu-233, Ile-242–Met-262, and Val-318–Ile-338.

The protein belongs to the glycosyltransferase 4 family. WecA subfamily. Mg(2+) serves as cofactor. The cofactor is Mn(2+).

The protein resides in the cell inner membrane. It carries out the reaction di-trans,octa-cis-undecaprenyl phosphate + UDP-N-acetyl-alpha-D-glucosamine = N-acetyl-alpha-D-glucosaminyl-di-trans,octa-cis-undecaprenyl diphosphate + UMP. It functions in the pathway bacterial outer membrane biogenesis; LPS O-antigen biosynthesis. It participates in bacterial outer membrane biogenesis; enterobacterial common antigen biosynthesis. Catalyzes the transfer of the GlcNAc-1-phosphate moiety from UDP-GlcNAc onto the carrier lipid undecaprenyl phosphate (C55-P), yielding GlcNAc-pyrophosphoryl-undecaprenyl (GlcNAc-PP-C55). This Salmonella typhi protein is Undecaprenyl-phosphate alpha-N-acetylglucosaminyl 1-phosphate transferase.